The chain runs to 409 residues: Argininosuccinate synthase (409 aa).

Residues 8–16 (AYSGGLDTS) and A34 contribute to the ATP site. Y85 lines the L-citrulline pocket. G115 provides a ligand contact to ATP. The L-aspartate site is built by T117, N121, and D122. N121 is a binding site for L-citrulline. Residues R125, S178, S187, E268, and Y280 each coordinate L-citrulline.

It belongs to the argininosuccinate synthase family. Type 1 subfamily. Homotetramer.

It is found in the cytoplasm. The catalysed reaction is L-citrulline + L-aspartate + ATP = 2-(N(omega)-L-arginino)succinate + AMP + diphosphate + H(+). The protein operates within amino-acid biosynthesis; L-arginine biosynthesis; L-arginine from L-ornithine and carbamoyl phosphate: step 2/3. The chain is Argininosuccinate synthase from Thermotoga sp. (strain RQ2).